Consider the following 363-residue polypeptide: Lipoyl synthase (363 aa).

7 residues coordinate [4Fe-4S] cluster: Cys-55, Cys-60, Cys-66, Cys-81, Cys-85, Cys-88, and Ser-292. The Radical SAM core domain maps to 67–281 (WESREATFLI…SKLAKELGFG (215 aa)). A disordered region spans residues 338-363 (PSEETPVTTRMAKTPAQSNSVAATIR). The span at 352 to 363 (PAQSNSVAATIR) shows a compositional bias: polar residues.

The protein belongs to the radical SAM superfamily. Lipoyl synthase family. The cofactor is [4Fe-4S] cluster.

Its subcellular location is the cytoplasm. The enzyme catalyses [[Fe-S] cluster scaffold protein carrying a second [4Fe-4S](2+) cluster] + N(6)-octanoyl-L-lysyl-[protein] + 2 oxidized [2Fe-2S]-[ferredoxin] + 2 S-adenosyl-L-methionine + 4 H(+) = [[Fe-S] cluster scaffold protein] + N(6)-[(R)-dihydrolipoyl]-L-lysyl-[protein] + 4 Fe(3+) + 2 hydrogen sulfide + 2 5'-deoxyadenosine + 2 L-methionine + 2 reduced [2Fe-2S]-[ferredoxin]. It participates in protein modification; protein lipoylation via endogenous pathway; protein N(6)-(lipoyl)lysine from octanoyl-[acyl-carrier-protein]: step 2/2. Catalyzes the radical-mediated insertion of two sulfur atoms into the C-6 and C-8 positions of the octanoyl moiety bound to the lipoyl domains of lipoate-dependent enzymes, thereby converting the octanoylated domains into lipoylated derivatives. The sequence is that of Lipoyl synthase from Corynebacterium aurimucosum (strain ATCC 700975 / DSM 44827 / CIP 107346 / CN-1) (Corynebacterium nigricans).